Consider the following 302-residue polypeptide: Quinolinate synthase (302 aa).

Residues H24 and S41 each contribute to the iminosuccinate site. C86 contributes to the [4Fe-4S] cluster binding site. Residues 112 to 114 (YVN) and S129 each bind iminosuccinate. C171 contributes to the [4Fe-4S] cluster binding site. Iminosuccinate-binding positions include 197-199 (HPE) and T214. C259 contributes to the [4Fe-4S] cluster binding site.

Belongs to the quinolinate synthase family. Type 2 subfamily. It depends on [4Fe-4S] cluster as a cofactor.

The protein localises to the cytoplasm. It carries out the reaction iminosuccinate + dihydroxyacetone phosphate = quinolinate + phosphate + 2 H2O + H(+). Its pathway is cofactor biosynthesis; NAD(+) biosynthesis; quinolinate from iminoaspartate: step 1/1. In terms of biological role, catalyzes the condensation of iminoaspartate with dihydroxyacetone phosphate to form quinolinate. The polypeptide is Quinolinate synthase (Dehalococcoides mccartyi (strain ATCC BAA-2100 / JCM 16839 / KCTC 5957 / BAV1)).